The sequence spans 363 residues: MSRFVPYLCAEKMKELRENASAIVAPGKGLLAADESTNTIGKRFAAINLENTEENRRAYRELLFTTDPEFAKHISGVILFHETVYQKTKDGKPFVELLRERGVLPGIKVDLGVVPLGGTADECTTQGLDNLAQRCAQYYNDGCRFAKWRCVLKISSHNPSYLAMLENANVLARYAFICQQNGLVPIVEPEVLPDGDHDLETAQRVTEQVLSFVYKALADHHVYLEGTLLKPNMVTCGQSCTKKYSVEDNARATVEALQRTVPVAVPGVVFLSGGQSELDATRNLNAINKYPGKKPWALSFSFGRALQASAIAAWQGKPENVKAGQAEFLQLAKANGAASLGKFEGELKTAAGQKSLFVANHAY.

Positions 56 and 147 each coordinate substrate. Residue E188 is the Proton acceptor of the active site. K230 (schiff-base intermediate with dihydroxyacetone-P) is an active-site residue.

It belongs to the class I fructose-bisphosphate aldolase family.

The enzyme catalyses beta-D-fructose 1,6-bisphosphate = D-glyceraldehyde 3-phosphate + dihydroxyacetone phosphate. Its pathway is carbohydrate degradation; glycolysis; D-glyceraldehyde 3-phosphate and glycerone phosphate from D-glucose: step 4/4. The polypeptide is Fructose-bisphosphate aldolase (FBPA) (Echinococcus multilocularis (Fox tapeworm)).